Here is a 173-residue protein sequence, read N- to C-terminus: Superoxide dismutase [Cu-Zn] (173 aa).

An N-terminal signal peptide occupies residues 1–22 (MNKAKTLLFTALAFGLSHQALA). 3 residues coordinate Cu cation: His-67, His-69, and His-92. Cys-74 and Cys-169 are joined by a disulfide. 4 residues coordinate Zn(2+): His-92, His-101, His-110, and Asp-113. His-147 serves as a coordination point for Cu cation.

This sequence belongs to the Cu-Zn superoxide dismutase family. In terms of assembly, homodimer. The cofactor is Cu cation. Requires Zn(2+) as cofactor.

It localises to the periplasm. The catalysed reaction is 2 superoxide + 2 H(+) = H2O2 + O2. Destroys radicals which are normally produced within the cells and which are toxic to biological systems. This is Superoxide dismutase [Cu-Zn] (sodC) from Photobacterium leiognathi.